A 489-amino-acid chain; its full sequence is DNA-directed RNA polymerase subunit beta' C-terminal section (489 aa).

The Mg(2+) site is built by Asp208, Asp210, and Asp212.

The protein belongs to the RNA polymerase beta' chain family. RpoC1 subfamily. As to quaternary structure, in plastids the minimal PEP RNA polymerase catalytic core is composed of four subunits: alpha, beta, beta', and beta''. When a (nuclear-encoded) sigma factor is associated with the core the holoenzyme is formed, which can initiate transcription. Mg(2+) serves as cofactor.

It is found in the plastid. The protein localises to the chloroplast. The enzyme catalyses RNA(n) + a ribonucleoside 5'-triphosphate = RNA(n+1) + diphosphate. DNA-dependent RNA polymerase catalyzes the transcription of DNA into RNA using the four ribonucleoside triphosphates as substrates. The chain is DNA-directed RNA polymerase subunit beta' C-terminal section (rpoC1B) from Chlamydomonas reinhardtii (Chlamydomonas smithii).